The following is a 282-amino-acid chain: NADPH-dependent 7-cyano-7-deazaguanine reductase (282 aa).

A substrate-binding site is contributed by 88 to 90; it reads IES. 90 to 91 is an NADPH binding site; sequence SK. Cysteine 190 acts as the Thioimide intermediate in catalysis. The active-site Proton donor is the aspartate 197. 229-230 is a substrate binding site; sequence HE. 258 to 259 provides a ligand contact to NADPH; the sequence is RG.

This sequence belongs to the GTP cyclohydrolase I family. QueF type 2 subfamily. Homodimer.

It localises to the cytoplasm. It catalyses the reaction 7-aminomethyl-7-carbaguanine + 2 NADP(+) = 7-cyano-7-deazaguanine + 2 NADPH + 3 H(+). It functions in the pathway tRNA modification; tRNA-queuosine biosynthesis. Catalyzes the NADPH-dependent reduction of 7-cyano-7-deazaguanine (preQ0) to 7-aminomethyl-7-deazaguanine (preQ1). The chain is NADPH-dependent 7-cyano-7-deazaguanine reductase from Pectobacterium carotovorum subsp. carotovorum (strain PC1).